An 85-amino-acid polypeptide reads, in one-letter code: Small ribosomal subunit protein bS16c (85 aa).

The protein belongs to the bacterial ribosomal protein bS16 family.

It localises to the plastid. The protein localises to the chloroplast. This is Small ribosomal subunit protein bS16c from Cucumis sativus (Cucumber).